The sequence spans 172 residues: Cytochrome b6-f complex iron-sulfur subunit (172 aa).

Residues Leu19–Val39 form a helical membrane-spanning segment. The 101-residue stretch at Gly61–Phe161 folds into the Rieske domain. [2Fe-2S] cluster is bound by residues Cys107, His109, Cys125, and His128. A disulfide bond links Cys112 and Cys127.

It belongs to the Rieske iron-sulfur protein family. In terms of assembly, the 4 large subunits of the cytochrome b6-f complex are cytochrome b6, subunit IV (17 kDa polypeptide, PetD), cytochrome f and the Rieske protein, while the 4 small subunits are PetG, PetL, PetM and PetN. The complex functions as a dimer. [2Fe-2S] cluster serves as cofactor.

Its subcellular location is the cellular thylakoid membrane. The enzyme catalyses 2 oxidized [plastocyanin] + a plastoquinol + 2 H(+)(in) = 2 reduced [plastocyanin] + a plastoquinone + 4 H(+)(out). Functionally, component of the cytochrome b6-f complex, which mediates electron transfer between photosystem II (PSII) and photosystem I (PSI), cyclic electron flow around PSI, and state transitions. The sequence is that of Cytochrome b6-f complex iron-sulfur subunit from Synechococcus sp. (strain JA-2-3B'a(2-13)) (Cyanobacteria bacterium Yellowstone B-Prime).